The following is a 240-amino-acid chain: ATP-dependent dethiobiotin synthetase BioD 1 (240 aa).

Position 13 to 18 (13 to 18 (DVGKTV)) interacts with ATP. Mg(2+) is bound at residue Thr17. Lys38 is an active-site residue. Ser42 serves as a coordination point for substrate. Residues Asp55, 116–119 (EGAG), 176–177 (NE), 205–207 (PYL), and Glu212 each bind ATP. Mg(2+) is bound by residues Asp55 and Glu116.

This sequence belongs to the dethiobiotin synthetase family. As to quaternary structure, homodimer. Requires Mg(2+) as cofactor.

It localises to the cytoplasm. It carries out the reaction (7R,8S)-7,8-diammoniononanoate + CO2 + ATP = (4R,5S)-dethiobiotin + ADP + phosphate + 3 H(+). Its pathway is cofactor biosynthesis; biotin biosynthesis; biotin from 7,8-diaminononanoate: step 1/2. Functionally, catalyzes a mechanistically unusual reaction, the ATP-dependent insertion of CO2 between the N7 and N8 nitrogen atoms of 7,8-diaminopelargonic acid (DAPA, also called 7,8-diammoniononanoate) to form a ureido ring. The protein is ATP-dependent dethiobiotin synthetase BioD 1 of Yersinia pestis.